The sequence spans 42 residues: Crotamine-IV-2 (42 aa).

Intrachain disulfides connect Cys-4–Cys-37, Cys-11–Cys-31, and Cys-19–Cys-38.

This sequence belongs to the crotamine-myotoxin family. In terms of assembly, monomer. Expressed by the venom gland.

It is found in the secreted. Cationic peptide that possesses multiple functions. It acts as a cell-penetrating peptide (CPP), and as a potent voltage-gated potassium channel (Kv) inhibitor. It exhibits antimicrobial activities, and hind limb paralysis. It also induces potent blockade of neuromuscular transmission in young chicken biventer cervicis preparation and potent myotoxic effect. In vivo, induces myonecrosis, upon intramuscular or subcutaneous injections into mice. This is Crotamine-IV-2 from Crotalus durissus cumanensis (South American rattlesnake).